The primary structure comprises 154 residues: Protein X (154 aa).

The interval 68 to 117 is mitochondrial targeting sequence; that stretch reads PCALRFTSARRMETTVNAHQFLPKVLHKRTLGLSAMSTTDLEAYFKDCLF.

This sequence belongs to the orthohepadnavirus protein X family. In terms of assembly, may form homodimer. May interact with host CEBPA, CFLAR, CREB1, DDB1, E4F1, HBXIP, HSPD1/HSP60, NFKBIA, POLR2E and SMAD4. Interacts with host SMC5-SMC6 complex and induces its degradation. Interacts with host TRPC4AP; leading to prevent ubiquitination of TRPC4AP. Interacts with host PLSCR1; this interaction promotes ubiquitination and degradation of HBx and impairs HBx-mediated cell proliferation. Post-translationally, a fraction may be phosphorylated in insect cells and HepG2 cells, a human hepatoblastoma cell line. Phosphorylated in vitro by host protein kinase C or mitogen-activated protein kinase. N-acetylated in insect cells.

It is found in the host cytoplasm. The protein localises to the host nucleus. It localises to the host mitochondrion. Its function is as follows. Multifunctional protein that plays a role in silencing host antiviral defenses and promoting viral transcription. Does not seem to be essential for HBV infection. May be directly involved in development of cirrhosis and liver cancer (hepatocellular carcinoma). Most of cytosolic activities involve modulation of cytosolic calcium. The effect on apoptosis is controversial depending on the cell types in which the studies have been conducted. May induce apoptosis by localizing in mitochondria and causing loss of mitochondrial membrane potential. May also modulate apoptosis by binding host CFLAR, a key regulator of the death-inducing signaling complex (DISC). Promotes viral transcription by using the host E3 ubiquitin ligase DDB1 to target the SMC5-SMC6 complex to proteasomal degradation. This host complex would otherwise bind to viral episomal DNA, and prevents its transcription. Moderately stimulates transcription of many different viral and cellular transcription elements. Promoters and enhancers stimulated by HBx contain DNA binding sites for NF-kappa-B, AP-1, AP-2, c-EBP, ATF/CREB, or the calcium-activated factor NF-AT. The protein is Protein X of Homo sapiens (Human).